The chain runs to 234 residues: Ribonuclease 3 (234 aa).

Residues 6–134 form the RNase III domain; that stretch reads RKSLEERVGH…IVGALYLDGG (129 aa). Glu47 is a Mg(2+) binding site. Residue Asp51 is part of the active site. 2 residues coordinate Mg(2+): Ser120 and Glu123. Residue Glu123 is part of the active site. The DRBM domain maps to 162–231; the sequence is DYKTRLQELV…AKNALEMKYK (70 aa).

This sequence belongs to the ribonuclease III family. Homodimer. It depends on Mg(2+) as a cofactor.

Its subcellular location is the cytoplasm. The catalysed reaction is Endonucleolytic cleavage to 5'-phosphomonoester.. In terms of biological role, digests double-stranded RNA. Involved in the processing of primary rRNA transcript to yield the immediate precursors to the large and small rRNAs (23S and 16S). Processes some mRNAs, and tRNAs when they are encoded in the rRNA operon. Processes pre-crRNA and tracrRNA of type II CRISPR loci if present in the organism. The chain is Ribonuclease 3 from Bdellovibrio bacteriovorus (strain ATCC 15356 / DSM 50701 / NCIMB 9529 / HD100).